Consider the following 233-residue polypeptide: Lipoprotein-releasing system ATP-binding protein LolD (233 aa).

The ABC transporter domain occupies 9-233 (LAINAVSKVF…GILSQSETHR (225 aa)). An ATP-binding site is contributed by 45–52 (GSSGSGKS).

This sequence belongs to the ABC transporter superfamily. Lipoprotein translocase (TC 3.A.1.125) family. The complex is composed of two ATP-binding proteins (LolD) and two transmembrane proteins (LolC and LolE).

Its subcellular location is the cell inner membrane. Functionally, part of the ABC transporter complex LolCDE involved in the translocation of mature outer membrane-directed lipoproteins, from the inner membrane to the periplasmic chaperone, LolA. Responsible for the formation of the LolA-lipoprotein complex in an ATP-dependent manner. In Shewanella denitrificans (strain OS217 / ATCC BAA-1090 / DSM 15013), this protein is Lipoprotein-releasing system ATP-binding protein LolD.